A 189-amino-acid polypeptide reads, in one-letter code: Transcription factor E (189 aa).

One can recognise an HTH TFE/IIEalpha-type domain in the interval 9–101 (AVKSLEIYVR…FWRIDSDTIN (93 aa)).

The protein belongs to the TFE family. In terms of assembly, monomer. Interaction with RNA polymerase subunits RpoF and RpoE is necessary for Tfe stimulatory transcription activity. Able to interact with Tbp and RNA polymerase in the absence of DNA promoter. Interacts both with the preinitiation and elongation complexes.

In terms of biological role, transcription factor that plays a role in the activation of archaeal genes transcribed by RNA polymerase. Facilitates transcription initiation by enhancing TATA-box recognition by TATA-box-binding protein (Tbp), and transcription factor B (Tfb) and RNA polymerase recruitment. Not absolutely required for transcription in vitro, but particularly important in cases where Tbp or Tfb function is not optimal. It dynamically alters the nucleic acid-binding properties of RNA polymerases by stabilizing the initiation complex and destabilizing elongation complexes. Seems to translocate with the RNA polymerase following initiation and acts by binding to the non template strand of the transcription bubble in elongation complexes. The polypeptide is Transcription factor E (Aeropyrum pernix (strain ATCC 700893 / DSM 11879 / JCM 9820 / NBRC 100138 / K1)).